Reading from the N-terminus, the 411-residue chain is LL-diaminopimelate aminotransferase (411 aa).

Substrate-binding residues include Y15 and G42. Pyridoxal 5'-phosphate is bound by residues Y72, 108-109 (AK), Y132, N188, Y219, and 247-249 (SFS). 3 residues coordinate substrate: K109, Y132, and N188. N6-(pyridoxal phosphate)lysine is present on K250. Positions 258 and 293 each coordinate pyridoxal 5'-phosphate. Positions 293 and 389 each coordinate substrate.

Belongs to the class-I pyridoxal-phosphate-dependent aminotransferase family. LL-diaminopimelate aminotransferase subfamily. In terms of assembly, homodimer. The cofactor is pyridoxal 5'-phosphate.

The catalysed reaction is (2S,6S)-2,6-diaminopimelate + 2-oxoglutarate = (S)-2,3,4,5-tetrahydrodipicolinate + L-glutamate + H2O + H(+). Its pathway is amino-acid biosynthesis; L-lysine biosynthesis via DAP pathway; LL-2,6-diaminopimelate from (S)-tetrahydrodipicolinate (aminotransferase route): step 1/1. In terms of biological role, involved in the synthesis of meso-diaminopimelate (m-DAP or DL-DAP), required for both lysine and peptidoglycan biosynthesis. Catalyzes the direct conversion of tetrahydrodipicolinate to LL-diaminopimelate. The sequence is that of LL-diaminopimelate aminotransferase from Desulfitobacterium hafniense (strain Y51).